The following is a 479-amino-acid chain: Aldehyde dehydrogenase family 3 member B2 (479 aa).

Catalysis depends on residues Glu223 and Cys257. A Cysteine methyl ester modification is found at Cys476. Cys476 carries the S-geranylgeranyl cysteine lipid modification. Residues 477–479 (TLL) constitute a propeptide, removed in mature form.

This sequence belongs to the aldehyde dehydrogenase family. Geranylgeranylation is important for localization to lipid droplets and enzyme activity. Expressed in testis, white adipose tissue, lung, small intestine, kidney, spleen and liver.

The protein resides in the lipid droplet. The enzyme catalyses an aldehyde + NAD(+) + H2O = a carboxylate + NADH + 2 H(+). It catalyses the reaction a long-chain fatty aldehyde + NAD(+) + H2O = a long-chain fatty acid + NADH + 2 H(+). It carries out the reaction a medium-chain fatty aldehyde + NAD(+) + H2O = a medium-chain fatty acid + NADH + 2 H(+). The catalysed reaction is hexadecanoate + NADH + 2 H(+) = hexadecanal + NAD(+) + H2O. The enzyme catalyses octanal + NAD(+) + H2O = octanoate + NADH + 2 H(+). It functions in the pathway alcohol metabolism; ethanol degradation; acetate from ethanol: step 2/2. Oxidizes medium and long chain fatty aldehydes in lipid droplets into non-toxic fatty acids. In Mus musculus (Mouse), this protein is Aldehyde dehydrogenase family 3 member B2.